The sequence spans 135 residues: MKNLVRLLAVIALIIGSFWGKVPAQALNLTSIALPSLPVAVLNAADAKLTTEFGAKIDLNNSDIRDFRDLRGFYPNLAGKIIKNAPYEEVEDVLNIPGLSDTQKERLQANLEKFTVTEPSKEFIEGDDRFNPGVY.

Residues 1 to 26 (MKNLVRLLAVIALIIGSFWGKVPAQA) form the signal peptide.

This sequence belongs to the PsbU family. PSII is composed of 1 copy each of membrane proteins PsbA, PsbB, PsbC, PsbD, PsbE, PsbF, PsbH, PsbI, PsbJ, PsbK, PsbL, PsbM, PsbT, PsbX, PsbY, PsbZ, Psb30/Ycf12, peripheral proteins PsbO, CyanoQ (PsbQ), PsbU, PsbV and a large number of cofactors. It forms dimeric complexes.

It localises to the cellular thylakoid membrane. Its function is as follows. One of the extrinsic, lumenal subunits of photosystem II (PSII). PSII is a light-driven water plastoquinone oxidoreductase, using light energy to abstract electrons from H(2)O, generating a proton gradient subsequently used for ATP formation. The extrinsic proteins stabilize the structure of photosystem II oxygen-evolving complex (OEC), the ion environment of oxygen evolution and protect the OEC against heat-induced inactivation. The polypeptide is Photosystem II extrinsic protein U (Microcystis aeruginosa (strain NIES-843 / IAM M-2473)).